Reading from the N-terminus, the 174-residue chain is Histone deacetylase complex subunit SAP30 homolog (174 aa).

The Atypical zinc-finger motif lies at 22–70 (CCLLDDGERCRKQAGNASYSKRIQKTVTQRRLKLSIDSHARHIYICDFH).

The protein belongs to the SAP30 family. As to quaternary structure, component of the class 1 Sin3-histone deacetylase complex (HDAC).

The protein resides in the nucleus. Functionally, required for the function of the class 1 Sin3-histone deacetylase complex (HDAC). This Anopheles gambiae (African malaria mosquito) protein is Histone deacetylase complex subunit SAP30 homolog.